We begin with the raw amino-acid sequence, 30 residues long: U-actitoxin-Bcg2a (30 aa).

Cysteine 7 and cysteine 27 form a disulfide bridge.

Its subcellular location is the secreted. The protein resides in the nematocyst. Functionally, possible voltage-gated potassium channel (Kv) blocker. This is U-actitoxin-Bcg2a from Bunodosoma cangicum (Sea anemone).